The following is a 384-amino-acid chain: GDSL esterase/lipase At1g28670 (384 aa).

The signal sequence occupies residues 1 to 24 (MASSLKKLISSFLLVLYSTTIIVA). The Nucleophile role is filled by Ser42. N-linked (GlcNAc...) asparagine glycosylation is found at Asn105, Asn138, and Asn321. Catalysis depends on residues Asp346 and His349.

This sequence belongs to the 'GDSL' lipolytic enzyme family.

It localises to the secreted. The chain is GDSL esterase/lipase At1g28670 from Arabidopsis thaliana (Mouse-ear cress).